Reading from the N-terminus, the 586-residue chain is Acyl-coenzyme A synthetase ACSM3, mitochondrial (586 aa).

The N-terminal 27 residues, 1–27, are a transit peptide targeting the mitochondrion; it reads MLACVTMKMLRHAKCFQRLAIFGSVRA. Residues K73 and K106 each carry the N6-succinyllysine modification. An N6-acetyllysine modification is found at K157. Residues 235–243, 374–379, D461, R476, and K572 each bind ATP; these read TSGTSGYPK and EGYGQT.

This sequence belongs to the ATP-dependent AMP-binding enzyme family. Mg(2+) serves as cofactor. Requires Mn(2+) as cofactor.

The protein localises to the mitochondrion. It localises to the mitochondrion matrix. It catalyses the reaction a medium-chain fatty acid + ATP + CoA = a medium-chain fatty acyl-CoA + AMP + diphosphate. The catalysed reaction is propanoate + ATP + CoA = propanoyl-CoA + AMP + diphosphate. It carries out the reaction butanoate + ATP + CoA = butanoyl-CoA + AMP + diphosphate. The enzyme catalyses 2-methylpropanoate + ATP + CoA = 2-methylpropanoyl-CoA + AMP + diphosphate. It catalyses the reaction 2-methylbutanoate + ATP + CoA = 2-methylbutanoyl-CoA + AMP + diphosphate. The catalysed reaction is octanoate + ATP + CoA = octanoyl-CoA + AMP + diphosphate. In terms of biological role, catalyzes the activation of fatty acids by CoA to produce an acyl-CoA, the first step in fatty acid metabolism. Capable of activating medium-chain fatty acids with a preference for isobutyrate among fatty acids with 2-6 carbon atoms. In Pongo abelii (Sumatran orangutan), this protein is Acyl-coenzyme A synthetase ACSM3, mitochondrial (ACSM3).